We begin with the raw amino-acid sequence, 142 residues long: Coactosin-like protein (142 aa).

A2 is modified (N-acetylalanine). In terms of domain architecture, ADF-H spans 2–130; it reads ATKIDKEACR…EEDFIRSELK (129 aa). The interval 66-75 is flexible and important for F-actin binding; it reads TGDAMSKRSK. K102 is subject to N6-acetyllysine. Phosphoserine is present on S141.

It belongs to the actin-binding proteins ADF family. Coactosin subfamily. As to quaternary structure, interacts with 5-lipoxygenase (ALOX5/5LO) in a calcium-independent manner. Binds to F-actin with a stoichiometry of 1:2.

It localises to the cytoplasm. The protein localises to the cytoskeleton. Its subcellular location is the nucleus. Its function is as follows. Binds to F-actin in a calcium-independent manner. Has no direct effect on actin depolymerization. Acts as a chaperone for ALOX5 (5LO), influencing both its stability and activity in leukotrienes synthesis. This chain is Coactosin-like protein (Cotl1), found in Mus musculus (Mouse).